We begin with the raw amino-acid sequence, 256 residues long: tRNA pseudouridine synthase A (256 aa).

D49 serves as the catalytic Nucleophile. Y104 lines the substrate pocket.

This sequence belongs to the tRNA pseudouridine synthase TruA family.

The catalysed reaction is uridine(38/39/40) in tRNA = pseudouridine(38/39/40) in tRNA. Functionally, formation of pseudouridine at positions 38, 39 and 40 in the anticodon stem and loop of transfer RNAs. This is tRNA pseudouridine synthase A from Methanopyrus kandleri (strain AV19 / DSM 6324 / JCM 9639 / NBRC 100938).